The sequence spans 950 residues: Serine/threonine-protein kinase atg1 (950 aa).

A Protein kinase domain is found at 6 to 311 (YTRLDEIGRG…FPDFFENGVI (306 aa)). ATP is bound by residues 12-20 (IGRGSFATV) and K35. D149 serves as the catalytic Proton acceptor. 5 disordered regions span residues 314–425 (PIPG…HATA), 443–467 (RQRG…LREE), 505–570 (QGGI…QSPT), 671–690 (VQTD…NPDS), and 926–950 (PTPS…TPPK). Composition is skewed to polar residues over residues 370–389 (GLTQ…PTTT), 447–458 (RNTFSEGSPQTD), and 511–520 (GAQTGALSRR). The span at 549-565 (SRADSMHNRQSSYERRY) shows a compositional bias: basic and acidic residues.

Belongs to the protein kinase superfamily. Ser/Thr protein kinase family. APG1/unc-51/ULK1 subfamily. As to quaternary structure, homodimer. Forms a ternary complex with ATG13 and ATG17.

The protein localises to the cytoplasm. The protein resides in the preautophagosomal structure membrane. The catalysed reaction is L-seryl-[protein] + ATP = O-phospho-L-seryl-[protein] + ADP + H(+). The enzyme catalyses L-threonyl-[protein] + ATP = O-phospho-L-threonyl-[protein] + ADP + H(+). In terms of biological role, serine/threonine protein kinase involved in the cytoplasm to vacuole transport (Cvt) and found to be essential in autophagy, where it is required for the formation of autophagosomes. Involved in the clearance of protein aggregates which cannot be efficiently cleared by the proteasome. Required for selective autophagic degradation of the nucleus (nucleophagy) as well as for mitophagy which contributes to regulate mitochondrial quantity and quality by eliminating the mitochondria to a basal level to fulfill cellular energy requirements and preventing excess ROS production. Also involved in endoplasmic reticulum-specific autophagic process, in selective removal of ER-associated degradation (ERAD) substrates. Plays a key role in ATG9 and ATG23 cycling through the pre-autophagosomal structure and is necessary to promote ATG18 binding to ATG9 through phosphorylation of ATG9. Catalyzes phosphorylation of ATG4, decreasing the interaction between ATG4 and ATG8 and impairing deconjugation of PE-conjugated forms of ATG8. In Neosartorya fischeri (strain ATCC 1020 / DSM 3700 / CBS 544.65 / FGSC A1164 / JCM 1740 / NRRL 181 / WB 181) (Aspergillus fischerianus), this protein is Serine/threonine-protein kinase atg1.